The sequence spans 36 residues: Serum amyloid P-component (36 aa).

Residues 6–36 (SGKVFVIPMATSTSHVKLHARVSEPISAMTM) form the Pentraxin (PTX) domain.

The protein belongs to the pentraxin family. In terms of assembly, homopentamer. Discoid arrangement of 5 covalently bound subunits. It depends on Ca(2+) as a cofactor.

It localises to the secreted. This is Serum amyloid P-component from Salmo salar (Atlantic salmon).